Here is a 134-residue protein sequence, read N- to C-terminus: Thioredoxin H2-2 (134 aa).

The tract at residues 1 to 20 (MGSFFSTMFTPPPAADDGGD) is disordered. A Thioredoxin domain is found at 3–130 (SFFSTMFTPP…LERKVNMFIS (128 aa)). Active-site nucleophile residues include Cys-56 and Cys-59. Cys-56 and Cys-59 are oxidised to a cystine.

The protein belongs to the thioredoxin family. Plant H-type subfamily.

The protein localises to the cytoplasm. Functionally, probable thiol-disulfide oxidoreductase that may be involved in the redox regulation of a number of cytosolic enzymes. The protein is Thioredoxin H2-2 of Oryza sativa subsp. japonica (Rice).